Consider the following 693-residue polypeptide: Elongation factor G (693 aa).

In terms of domain architecture, tr-type G spans 6–286 (KYTRNIGIAA…AICRYLPSPI (281 aa)). Residues 15–22 (AHIDAGKT), 83–87 (DTPGH), and 137–140 (NKMD) contribute to the GTP site.

The protein belongs to the TRAFAC class translation factor GTPase superfamily. Classic translation factor GTPase family. EF-G/EF-2 subfamily.

It localises to the cytoplasm. Its function is as follows. Catalyzes the GTP-dependent ribosomal translocation step during translation elongation. During this step, the ribosome changes from the pre-translocational (PRE) to the post-translocational (POST) state as the newly formed A-site-bound peptidyl-tRNA and P-site-bound deacylated tRNA move to the P and E sites, respectively. Catalyzes the coordinated movement of the two tRNA molecules, the mRNA and conformational changes in the ribosome. In Karelsulcia muelleri (strain GWSS) (Sulcia muelleri), this protein is Elongation factor G.